The following is a 156-amino-acid chain: Endogenous retrovirus group K member 19 Pro protein (156 aa).

A Peptidase A2 domain is found at 21 to 96 (FEGLVDTGAD…IPLNLWGRDL (76 aa)). Residue aspartate 26 is part of the active site. Residues 111-156 (YSPTSQKIMTKMGYILGKGLGKNEDGIKIPVEAKINQKREGIGYPF) enclose the G-patch domain.

This sequence belongs to the peptidase A2 family. HERV class-II K(HML-2) subfamily. As to quaternary structure, active as a homodimer. Post-translationally, autoproteolytically processed at the N-terminus. Expected C-terminal autoprocessing not detected. The sequence shown is that of the processed Pro protein.

The enzyme catalyses Processing at the authentic HIV-1 PR recognition site and release of the mature p17 matrix and the p24 capsid protein, as a result of the cleavage of the -SQNY-|-PIVQ- cleavage site.. Its function is as follows. Retroviral proteases have roles in the processing of the primary translation products and the maturation of the viral particle. Endogenous Pro proteins may have kept, lost or modified their original function during evolution. The protein is Endogenous retrovirus group K member 19 Pro protein (ERVK-19) of Homo sapiens (Human).